Consider the following 1395-residue polypeptide: uncharacterized protein (1395 aa).

89-96 lines the ATP pocket; it reads AYKKWGKS. Disordered stretches follow at residues 146 to 166 and 205 to 391; these read EEKI…LSPP and SSSS…MENR. 2 stretches are compositionally biased toward low complexity: residues 155–166 and 205–222; these read GSPSPEAELSPP and SSSS…TSSP. Residues 230–269 show a composition bias toward basic and acidic residues; that stretch reads EVTKERSSEVPTTVHEKTQSKSKNEKENKFSNGTIEEKPA. The span at 287–301 shows a compositional bias: low complexity; that stretch reads SWSSGSSEAGSSSSG. A compositionally biased stretch (basic residues) spans 313–328; the sequence is VKVRHKAREIRNKKGR. Over residues 337–346 the composition is skewed to basic and acidic residues; that stretch reads KHGEKAERNI. Residues 349 to 358 are compositionally biased toward low complexity; the sequence is GSSSSSSSGS. Residues 369–391 are compositionally biased toward basic and acidic residues; that stretch reads PLKEIGRKDPGSTEGKDLYMENR. Ser814 and Ser1080 each carry phosphoserine. The interval 1110–1132 is disordered; sequence PISASELSPGGGSESEFESEKDE. Phosphoserine occurs at positions 1194 and 1338. The segment covering 1346 to 1359 has biased composition (basic and acidic residues); that stretch reads TGERDSGAKSDGFR. Residues 1346–1395 are disordered; the sequence is TGERDSGAKSDGFRGKMCSSASSTSEETGSEGGGEWVGPSEEELFSRTHL.

This is an uncharacterized protein from Homo sapiens (Human).